Here is a 382-residue protein sequence, read N- to C-terminus: Bifunctional enzyme IspD/IspF (382 aa).

Residues 1 to 226 (MTLAVLIVAA…RSTMDNIPDI (226 aa)) are 2-C-methyl-D-erythritol 4-phosphate cytidylyltransferase. A 2-C-methyl-D-erythritol 2,4-cyclodiphosphate synthase region spans residues 227–382 (RLGNGYDVHR…ALATATLVRA (156 aa)). A divalent metal cation contacts are provided by Asp-233 and His-235. 4-CDP-2-C-methyl-D-erythritol 2-phosphate contacts are provided by residues 233-235 (DVH) and 259-260 (HS). His-267 is a binding site for a divalent metal cation. 4-CDP-2-C-methyl-D-erythritol 2-phosphate-binding positions include 281–283 (DIG), 357–360 (TTSE), Phe-364, and Arg-367.

It in the N-terminal section; belongs to the IspD/TarI cytidylyltransferase family. IspD subfamily. In the C-terminal section; belongs to the IspF family. A divalent metal cation serves as cofactor.

It catalyses the reaction 2-C-methyl-D-erythritol 4-phosphate + CTP + H(+) = 4-CDP-2-C-methyl-D-erythritol + diphosphate. It carries out the reaction 4-CDP-2-C-methyl-D-erythritol 2-phosphate = 2-C-methyl-D-erythritol 2,4-cyclic diphosphate + CMP. It participates in isoprenoid biosynthesis; isopentenyl diphosphate biosynthesis via DXP pathway; isopentenyl diphosphate from 1-deoxy-D-xylulose 5-phosphate: step 2/6. Its pathway is isoprenoid biosynthesis; isopentenyl diphosphate biosynthesis via DXP pathway; isopentenyl diphosphate from 1-deoxy-D-xylulose 5-phosphate: step 4/6. Its function is as follows. Bifunctional enzyme that catalyzes the formation of 4-diphosphocytidyl-2-C-methyl-D-erythritol from CTP and 2-C-methyl-D-erythritol 4-phosphate (MEP) (IspD), and catalyzes the conversion of 4-diphosphocytidyl-2-C-methyl-D-erythritol 2-phosphate (CDP-ME2P) to 2-C-methyl-D-erythritol 2,4-cyclodiphosphate (ME-CPP) with a corresponding release of cytidine 5-monophosphate (CMP) (IspF). In Ruegeria sp. (strain TM1040) (Silicibacter sp.), this protein is Bifunctional enzyme IspD/IspF.